Here is a 307-residue protein sequence, read N- to C-terminus: Ribosomal RNA small subunit methyltransferase H (307 aa).

Residues 34-36, Asp-54, Phe-79, Asp-101, and Gln-108 contribute to the S-adenosyl-L-methionine site; that span reads GGH.

Belongs to the methyltransferase superfamily. RsmH family.

The protein resides in the cytoplasm. The enzyme catalyses cytidine(1402) in 16S rRNA + S-adenosyl-L-methionine = N(4)-methylcytidine(1402) in 16S rRNA + S-adenosyl-L-homocysteine + H(+). Functionally, specifically methylates the N4 position of cytidine in position 1402 (C1402) of 16S rRNA. In Ruthia magnifica subsp. Calyptogena magnifica, this protein is Ribosomal RNA small subunit methyltransferase H.